The following is a 218-amino-acid chain: uncharacterized protein (218 aa).

Disordered stretches follow at residues 30 to 71 (FSHR…RSPP), 93 to 120 (SGRG…PRPD), and 133 to 209 (MEVE…PGFP). Residues 43-71 (PGAPAVVPAPVSAPRPASSPARSESRSPP) are compositionally biased toward low complexity. A compositionally biased stretch (gly residues) spans 94-110 (GRGGGGGGGGGARTGGG). Over residues 138–148 (PPHPPPQPQVC) the composition is skewed to pro residues. Positions 156-171 (PGHGRAGLPEGKGPGG) are enriched in gly residues. Residues 191–209 (RAPSPAAPRRGRLPAPGFP) are compositionally biased toward low complexity.

This is an uncharacterized protein from Homo sapiens (Human).